A 389-amino-acid polypeptide reads, in one-letter code: Chalcone synthase 6 (389 aa).

Cysteine 164 is an active-site residue.

It belongs to the thiolase-like superfamily. Chalcone/stilbene synthases family.

It catalyses the reaction (E)-4-coumaroyl-CoA + 3 malonyl-CoA + 3 H(+) = 2',4,4',6'-tetrahydroxychalcone + 3 CO2 + 4 CoA. It functions in the pathway secondary metabolite biosynthesis; flavonoid biosynthesis. Functionally, the primary product of this enzyme is 4,2',4',6'-tetrahydroxychalcone (also termed naringenin-chalcone or chalcone) which can under specific conditions spontaneously isomerize into naringenin. The polypeptide is Chalcone synthase 6 (CHS6) (Trifolium subterraneum (Subterranean clover)).